We begin with the raw amino-acid sequence, 312 residues long: Small ribosomal subunit protein uS2 (312 aa).

The protein belongs to the universal ribosomal protein uS2 family.

This Ruthia magnifica subsp. Calyptogena magnifica protein is Small ribosomal subunit protein uS2.